We begin with the raw amino-acid sequence, 397 residues long: Thioredoxin-interacting protein (397 aa).

A Glycyl lysine isopeptide (Lys-Gly) (interchain with G-Cter in ubiquitin) cross-link involves residue Lys-213. Ser-362 carries the post-translational modification Phosphoserine.

The protein belongs to the arrestin family. As to quaternary structure, homodimer; disulfide-linked. Interacts with TXN/thioredoxin through its redox-active site. Interacts with transcriptional repressors ZBTB16, ZBTB32 and HDAC1. Interacts with DDIT4. Ubiquitinated; undergoes heterotypic 'Lys-48'-/'Lys-63'-branched polyubiquitination catalyzed by ITCH and UBR5 resulting in proteasomal degradation. Deubiquitinated by USP5, leading to TXNIP stabilization. In terms of tissue distribution, ubiquitously expressed.

It is found in the cytoplasm. In terms of biological role, may act as an oxidative stress mediator by inhibiting thioredoxin activity or by limiting its bioavailability. Interacts with COPS5 and restores COPS5-induced suppression of CDKN1B stability, blocking the COPS5-mediated translocation of CDKN1B from the nucleus to the cytoplasm. Functions as a transcriptional repressor, possibly by acting as a bridge molecule between transcription factors and corepressor complexes, and over-expression will induce G0/G1 cell cycle arrest. Required for the maturation of natural killer cells. Acts as a suppressor of tumor cell growth. Inhibits the proteasomal degradation of DDIT4, and thereby contributes to the inhibition of the mammalian target of rapamycin complex 1 (mTORC1). In Mus musculus (Mouse), this protein is Thioredoxin-interacting protein (Txnip).